We begin with the raw amino-acid sequence, 404 residues long: Chorismate synthase (404 aa).

R47 is an NADP(+) binding site. FMN contacts are provided by residues 156–158 (RSS), 281–282 (NA), G321, 336–340 (KPTST), and R363.

This sequence belongs to the chorismate synthase family. As to quaternary structure, homotetramer. It depends on FMNH2 as a cofactor.

It catalyses the reaction 5-O-(1-carboxyvinyl)-3-phosphoshikimate = chorismate + phosphate. Its pathway is metabolic intermediate biosynthesis; chorismate biosynthesis; chorismate from D-erythrose 4-phosphate and phosphoenolpyruvate: step 7/7. Catalyzes the anti-1,4-elimination of the C-3 phosphate and the C-6 proR hydrogen from 5-enolpyruvylshikimate-3-phosphate (EPSP) to yield chorismate, which is the branch point compound that serves as the starting substrate for the three terminal pathways of aromatic amino acid biosynthesis. This reaction introduces a second double bond into the aromatic ring system. The polypeptide is Chorismate synthase (Rhodopirellula baltica (strain DSM 10527 / NCIMB 13988 / SH1)).